The chain runs to 152 residues: Pleckstrin homology-like domain family A member 2 (152 aa).

2 positions are modified to phosphoserine: serine 3 and serine 42. A PH domain is found at 7 to 99; it reads VLREGELEKR…WNAAIALALI (93 aa). A disordered region spans residues 112–152; that stretch reads SRQERTAPAAPAEDAVAAAAAAPSEPSEPSRPSPQPKPRTP. The segment covering 118–138 has biased composition (low complexity); that stretch reads APAAPAEDAVAAAAAAPSEPS. Over residues 140 to 152 the composition is skewed to pro residues; sequence PSRPSPQPKPRTP. A phosphoserine mark is found at serine 141 and serine 144. Residue threonine 151 is modified to Phosphothreonine.

The protein belongs to the PHLDA2 family. As to expression, expressed in placenta and adult prostate gland. In placenta, it is present in all cells of the villous cytotrophoblast. The protein is absent in cells from hydatidiform moles. Hydatidiform mole is a gestation characterized by abnormal development of both fetus and trophoblast. The majority of hydatidiform moles are associated with an excess of paternal to maternal genomes and are likely to result from the abnormal expression of imprinted genes (at protein level). Expressed at low levels in adult liver and lung, and fetal liver. Expressed in adult brain and neuroblastoma, medullablastoma and glioblastoma cell lines.

The protein resides in the cytoplasm. It is found in the membrane. Plays a role in regulating placenta growth. May act via its PH domain that competes with other PH domain-containing proteins, thereby preventing their binding to membrane lipids. The protein is Pleckstrin homology-like domain family A member 2 (PHLDA2) of Homo sapiens (Human).